We begin with the raw amino-acid sequence, 106 residues long: Halilectin 3, beta chain (106 aa).

Asparagine 65 is a glycosylation site (N-linked (GlcNAc...) asparagine).

As to quaternary structure, probable heterotrimer consisting of an alpha chain and two beta chains. The alpha chain can probably have different glycosylation states. Post-translationally, glycosylated.

In terms of biological role, lectin with affinity for N-acetyl-galactosamine, carragenan and glycoprotein porcine stomach mucin (PSM). Has metal-independent hemagglutinating activity towards erythrocytes from rabbit and human. Hemagglutinating activity is not inhibited by D-galactose, D-glucose, D-mannose, D-fucose, methyl-alpha-D-galactopyranoside, methyl-alpha-D-glucopyranoside, N-acetyl-glucosamine, N-acetyl-mannosamine, D-fructose, alpha-D-lactose, beta-D-lactose, D-lactulose, D-sucrose, fucoidan or glycoproteins thyroglobulin and ovalmucoid. This is Halilectin 3, beta chain from Haliclona caerulea (Blue Caribbean sponge).